We begin with the raw amino-acid sequence, 611 residues long: Chaperonin 60 subunit beta 4, chloroplastic (611 aa).

The transit peptide at 1–37 directs the protein to the chloroplast; the sequence is MAFSQAALSALPLSDRTFRKKPSSSSSSSPNFVLRVR. Residues 377–480 are a coiled coil; the sequence is QKAVDERVSQ…LDNTEQKIGA (104 aa). Positions 574-595 are disordered; the sequence is INPPLPTSSPATSSMFPDRKLP.

Belongs to the chaperonin (HSP60) family. As to quaternary structure, part of the Cpn60 complex composed of 7 alpha and 7 beta subunits. Can also form a complex composed of 14 beta subunits only. Both complexes show ATPase activity. The Cpn60 complex interacts with the Cpn10 complex. Interacts with NDHH.

It is found in the plastid. It localises to the chloroplast stroma. Involved specifically in the folding of NDHH, a subunit of the chloroplast NADH dehydrogenase-like complex (NDH). The chain is Chaperonin 60 subunit beta 4, chloroplastic (CPN60B4) from Arabidopsis thaliana (Mouse-ear cress).